A 191-amino-acid polypeptide reads, in one-letter code: FMN reductase (NADPH) (191 aa).

This sequence belongs to the SsuE family. As to quaternary structure, homodimer.

The catalysed reaction is FMNH2 + NADP(+) = FMN + NADPH + 2 H(+). Its function is as follows. Catalyzes an NADPH-dependent reduction of FMN, but is also able to reduce FAD or riboflavin. In Escherichia coli (strain K12), this protein is FMN reductase (NADPH) (ssuE).